A 572-amino-acid chain; its full sequence is Hemagglutinin-neuraminidase (572 aa).

Topologically, residues 1 to 31 are intravirion; it reads MEYWKHTNHGKDAGNELETSMATHGNKLTNK. Residues 32 to 52 form a helical membrane-spanning segment; that stretch reads IIYILWTIILVLLSIVFIIVL. At 53 to 572 the chain is on the virion surface side; sequence INSIKSEKAH…FKTEIPKSCS (520 aa). 2 disulfides stabilise this stretch: cysteine 190–cysteine 214 and cysteine 256–cysteine 269. The interval 252–257 is involved in neuraminidase activity; sequence NRKSCS. Residues asparagine 308 and asparagine 351 are each glycosylated (N-linked (GlcNAc...) asparagine; by host). 2 cysteine pairs are disulfide-bonded: cysteine 355/cysteine 469 and cysteine 463/cysteine 473. N-linked (GlcNAc...) asparagine; by host glycosylation is present at asparagine 523. Cysteine 535 and cysteine 544 form a disulfide bridge.

The protein belongs to the paramyxoviruses hemagglutinin-neuraminidase family. As to quaternary structure, homotetramer; composed of disulfide-linked homodimers. Interacts with F protein trimer.

It localises to the virion membrane. The protein localises to the host cell membrane. The catalysed reaction is Hydrolysis of alpha-(2-&gt;3)-, alpha-(2-&gt;6)-, alpha-(2-&gt;8)- glycosidic linkages of terminal sialic acid residues in oligosaccharides, glycoproteins, glycolipids, colominic acid and synthetic substrates.. In terms of biological role, attaches the virus to sialic acid-containing cell receptors and thereby initiating infection. Binding of HN protein to the receptor induces a conformational change that allows the F protein to trigger virion/cell membranes fusion. Functionally, neuraminidase activity ensures the efficient spread of the virus by dissociating the mature virions from the neuraminic acid containing glycoproteins. The chain is Hemagglutinin-neuraminidase (HN) from Homo sapiens (Human).